The primary structure comprises 212 residues: Fe/S biogenesis protein NfuA (212 aa).

2 residues coordinate [4Fe-4S] cluster: Cys169 and Cys172.

It belongs to the NfuA family. As to quaternary structure, homodimer. It depends on [4Fe-4S] cluster as a cofactor.

In terms of biological role, involved in iron-sulfur cluster biogenesis. Binds a 4Fe-4S cluster, can transfer this cluster to apoproteins, and thereby intervenes in the maturation of Fe/S proteins. Could also act as a scaffold/chaperone for damaged Fe/S proteins. The protein is Fe/S biogenesis protein NfuA of Acinetobacter baylyi (strain ATCC 33305 / BD413 / ADP1).